We begin with the raw amino-acid sequence, 691 residues long: Elongation factor G (691 aa).

Residues 8–283 enclose the tr-type G domain; sequence KKVRNIGIAA…AVVAYLPAPD (276 aa). Residues 17 to 24, 81 to 85, and 135 to 138 contribute to the GTP site; these read AHIDAGKT, DTPGH, and NKMD.

Belongs to the TRAFAC class translation factor GTPase superfamily. Classic translation factor GTPase family. EF-G/EF-2 subfamily.

The protein resides in the cytoplasm. Its function is as follows. Catalyzes the GTP-dependent ribosomal translocation step during translation elongation. During this step, the ribosome changes from the pre-translocational (PRE) to the post-translocational (POST) state as the newly formed A-site-bound peptidyl-tRNA and P-site-bound deacylated tRNA move to the P and E sites, respectively. Catalyzes the coordinated movement of the two tRNA molecules, the mRNA and conformational changes in the ribosome. This Campylobacter jejuni subsp. doylei (strain ATCC BAA-1458 / RM4099 / 269.97) protein is Elongation factor G.